The chain runs to 31 residues: Sarcolipin (31 aa).

The Cytoplasmic portion of the chain corresponds to 1 to 7; sequence MGINTRE. The helical transmembrane segment at 8 to 26 threads the bilayer; the sequence is LFLNFTIVLITVILMWLLV. The Lumenal segment spans residues 27 to 31; the sequence is RSYQY.

It belongs to the sarcolipin family. In terms of assembly, homooligomer. Can also form heterooligomers with other sarcoplasmic/endoplasmic reticulum calcium ATPase (SERCA) regulators ARLN, ERLN, PLN and STRIT1/DWORF. Monomer. Interacts with calcium ATPase ATP2A1/SERCA1. Interacts as a monomer with ATP2A2/SERCA2; the interaction decreases ATP2A2 Ca(2+) affinity. Interacts with VMP1; VMP1 competes with PLN and SLN to prevent them from forming an inhibitory complex with ATP2A2.

It localises to the sarcoplasmic reticulum membrane. Its subcellular location is the endoplasmic reticulum membrane. Its function is as follows. Reversibly inhibits the activity of ATP2A1/SERCA1 and ATP2A2/SERCA2 in sarcoplasmic reticulum by decreasing the apparent affinity of the ATPase for Ca(2+). Also inhibits the activity of ATP2A3/SERCA3. Modulates calcium re-uptake during muscle relaxation and plays an important role in calcium homeostasis in muscle. Required for muscle-based, non-shivering thermogenesis. This chain is Sarcolipin, found in Homo sapiens (Human).